The primary structure comprises 405 residues: Aspartokinase (405 aa).

2 consecutive ACT domains span residues 267–344 (VSME…AKVS) and 345–405 (IVGV…QLDQ).

The protein belongs to the aspartokinase family.

It catalyses the reaction L-aspartate + ATP = 4-phospho-L-aspartate + ADP. The protein operates within amino-acid biosynthesis; L-lysine biosynthesis via DAP pathway; (S)-tetrahydrodipicolinate from L-aspartate: step 1/4. Its pathway is amino-acid biosynthesis; L-methionine biosynthesis via de novo pathway; L-homoserine from L-aspartate: step 1/3. It functions in the pathway amino-acid biosynthesis; L-threonine biosynthesis; L-threonine from L-aspartate: step 1/5. The sequence is that of Aspartokinase (lysC) from Helicobacter pylori (strain J99 / ATCC 700824) (Campylobacter pylori J99).